Consider the following 257-residue polypeptide: Probable septum site-determining protein MinC (257 aa).

The protein belongs to the MinC family. Interacts with MinD and FtsZ.

Cell division inhibitor that blocks the formation of polar Z ring septums. Rapidly oscillates between the poles of the cell to destabilize FtsZ filaments that have formed before they mature into polar Z rings. Prevents FtsZ polymerization. The chain is Probable septum site-determining protein MinC from Burkholderia lata (strain ATCC 17760 / DSM 23089 / LMG 22485 / NCIMB 9086 / R18194 / 383).